A 227-amino-acid polypeptide reads, in one-letter code: Large ribosomal subunit protein bL25 (227 aa).

The interval 199–227 (AIAEAQSAEAAEEKAEESAEDEKKDGEEA) is disordered. Basic and acidic residues predominate over residues 209 to 227 (AEEKAEESAEDEKKDGEEA).

This sequence belongs to the bacterial ribosomal protein bL25 family. CTC subfamily. As to quaternary structure, part of the 50S ribosomal subunit; part of the 5S rRNA/L5/L18/L25 subcomplex. Contacts the 5S rRNA. Binds to the 5S rRNA independently of L5 and L18.

In terms of biological role, this is one of the proteins that binds to the 5S RNA in the ribosome where it forms part of the central protuberance. The polypeptide is Large ribosomal subunit protein bL25 (Methylobacterium radiotolerans (strain ATCC 27329 / DSM 1819 / JCM 2831 / NBRC 15690 / NCIMB 10815 / 0-1)).